The primary structure comprises 104 residues: Large ribosomal subunit protein bL28 (104 aa).

This sequence belongs to the bacterial ribosomal protein bL28 family.

This Wolbachia pipientis wMel protein is Large ribosomal subunit protein bL28.